A 350-amino-acid polypeptide reads, in one-letter code: Bifunctional nitrilase/nitrile hydratase NIT4B (350 aa).

A CN hydrolase domain is found at 30–302 (VRATVVQAST…EALISADLDL (273 aa)). Residue Glu70 is the Proton acceptor of the active site. Lys157 is a catalytic residue. Residue Cys191 is the Nucleophile of the active site.

It belongs to the carbon-nitrogen hydrolase superfamily. Nitrilase family. In terms of tissue distribution, highly expressed in leaves and cotyledons, lower expression in stems and roots.

It catalyses the reaction L-asparagine = 3-cyano-L-alanine + H2O. The enzyme catalyses 3-cyano-L-alanine + 2 H2O = L-aspartate + NH4(+). Its function is as follows. Involved in the cyanide detoxification pathway. Has nitrilase and nitrile-hydratase activity in the ratio 3.3:1, producing both asparagine and aspartic acid from beta-cyano-L-alanine (Ala(CN)). Can also use 3-phenylpropionitrile as substrate, but not indole-3-acetonitrile. This chain is Bifunctional nitrilase/nitrile hydratase NIT4B (NIT4B), found in Lupinus angustifolius (Narrow-leaved blue lupine).